The primary structure comprises 186 residues: Cytochrome b6-f complex iron-sulfur subunit (186 aa).

Residues 16–38 (LLSFVTGGAIAATTAATLYPVVL) form a helical membrane-spanning segment. Residues 74–163 (GEPVLTLGLD…ATVSDDKVLI (90 aa)) enclose the Rieske domain. Cys-109, His-111, Cys-127, and His-130 together coordinate [2Fe-2S] cluster. A disulfide bond links Cys-114 and Cys-129.

It belongs to the Rieske iron-sulfur protein family. In terms of assembly, the 4 large subunits of the cytochrome b6-f complex are cytochrome b6, subunit IV (17 kDa polypeptide, PetD), cytochrome f and the Rieske protein, while the 4 small subunits are PetG, PetL, PetM and PetN. The complex functions as a dimer. [2Fe-2S] cluster is required as a cofactor.

The protein localises to the cell inner membrane. It catalyses the reaction 2 oxidized [plastocyanin] + a plastoquinol + 2 H(+)(in) = 2 reduced [plastocyanin] + a plastoquinone + 4 H(+)(out). Component of the cytochrome b6-f complex, which mediates electron transfer between photosystem II (PSII) and photosystem I (PSI), cyclic electron flow around PSI, and state transitions. The sequence is that of Cytochrome b6-f complex iron-sulfur subunit from Gloeobacter violaceus (strain ATCC 29082 / PCC 7421).